Consider the following 270-residue polypeptide: Regulatory protein RecX (270 aa).

The protein belongs to the RecX family.

The protein resides in the cytoplasm. In terms of biological role, modulates RecA activity. This is Regulatory protein RecX from Bacillus cereus (strain ZK / E33L).